A 206-amino-acid polypeptide reads, in one-letter code: Outer-membrane lipoprotein carrier protein (206 aa).

The first 23 residues, 1 to 23 (MKPLFPMLTAAAIAAGLAAPAQA), serve as a signal peptide directing secretion.

The protein belongs to the LolA family. Monomer.

It localises to the periplasm. In terms of biological role, participates in the translocation of lipoproteins from the inner membrane to the outer membrane. Only forms a complex with a lipoprotein if the residue after the N-terminal Cys is not an aspartate (The Asp acts as a targeting signal to indicate that the lipoprotein should stay in the inner membrane). The sequence is that of Outer-membrane lipoprotein carrier protein from Chromobacterium violaceum (strain ATCC 12472 / DSM 30191 / JCM 1249 / CCUG 213 / NBRC 12614 / NCIMB 9131 / NCTC 9757 / MK).